Consider the following 414-residue polypeptide: Probable elongation factor 1-gamma 1 (414 aa).

One can recognise a GST N-terminal domain in the interval 1 to 82 (MALVLHTYKG…YVSRLNGDNS (82 aa)). The GST C-terminal domain occupies 87–215 (SLIEYAQIEQ…VKQTEAVPPI (129 aa)). Residues 214–224 (PIASKKAAQPA) show a composition bias toward low complexity. Residues 214 to 260 (PIASKKAAQPAKPKEEPKKKEAPVAEAPKLAEEEEAPKPKAKNPLDL) are disordered. Positions 225–236 (KPKEEPKKKEAP) are enriched in basic and acidic residues. Residues 254-414 (AKNPLDLLPP…EALLDAKCFK (161 aa)) form the EF-1-gamma C-terminal domain.

As to quaternary structure, EF-1 is composed of four subunits: alpha, beta, delta, and gamma.

Its function is as follows. Probably plays a role in anchoring the complex to other cellular components. This Arabidopsis thaliana (Mouse-ear cress) protein is Probable elongation factor 1-gamma 1.